The following is a 232-amino-acid chain: 7-cyano-7-deazaguanine synthase (232 aa).

Position 7–17 (7–17 (LSGGLDSTVVT)) interacts with ATP. 4 residues coordinate Zn(2+): cysteine 195, cysteine 206, cysteine 209, and cysteine 212.

The protein belongs to the QueC family. It depends on Zn(2+) as a cofactor.

It carries out the reaction 7-carboxy-7-deazaguanine + NH4(+) + ATP = 7-cyano-7-deazaguanine + ADP + phosphate + H2O + H(+). It functions in the pathway purine metabolism; 7-cyano-7-deazaguanine biosynthesis. In terms of biological role, catalyzes the ATP-dependent conversion of 7-carboxy-7-deazaguanine (CDG) to 7-cyano-7-deazaguanine (preQ(0)). The sequence is that of 7-cyano-7-deazaguanine synthase from Methanocaldococcus jannaschii (strain ATCC 43067 / DSM 2661 / JAL-1 / JCM 10045 / NBRC 100440) (Methanococcus jannaschii).